A 478-amino-acid chain; its full sequence is H(+)/Cl(-) exchange transporter ClcA (478 aa).

At 1 to 32 (MTHSTQQLSPEGVAEGKRGRLIRELVNRDKTP) the chain is on the cytoplasmic side. Residues 33-69 (LIILIMAAVVGVVTGLLGVAFDRGVDWVQQQRLLALA) traverse the membrane as a helical segment. Over 70-76 (NVADSAL) the chain is Periplasmic. The chain crosses the membrane as a helical span at residues 77 to 100 (LVWPLAFIMSALLAMMGYFLVSRF). A Selectivity filter part_1 motif is present at residues 106-110 (GSGIP). S107 contacts chloride. An intramembrane region (helical) is located at residues 109 to 116 (IPEIEGAM). At 117–123 (EEMRPVR) the chain is on the cytoplasmic side. 2 helical membrane-spanning segments follow: residues 124-141 (WWRV…TLGA) and 148-166 (EGPM…VDIF). The short motif at 146–150 (GREGP) is the Selectivity filter part_2 element. Over 167-176 (RLRSPEARHS) the chain is Cytoplasmic. 2 intramembrane regions (helical) span residues 177–189 (LLAT…LSAA) and 193–201 (PLAGILFVI). The Cytoplasmic portion of the chain corresponds to 202–214 (EEMRSQFRYSLVS). The chain crosses the membrane as a helical span at residues 215-232 (IKAVFIGVITSTIVYRYF). The Periplasmic portion of the chain corresponds to 233-252 (NGERAIIEVGKLSDAPLNTL). Residues 253–281 (WLYLLLGIIFGAVGVIFNALIFRTQDMFV) form a helical membrane-spanning segment. The Cytoplasmic portion of the chain corresponds to 282–287 (RFHGGD). The helical transmembrane segment at 288 to 309 (WRKLVLIGGLLGGMCGLLALLH) threads the bilayer. Residues 310-329 (GNAVGGGFALIPIAAAGNFS) lie on the Periplasmic side of the membrane. Helical transmembrane passes span 330–349 (IGML…LCFG) and 355–376 (GIFA…LSCA). The Selectivity filter part_3 motif lies at 355–359 (GIFAP). I356 and F357 together coordinate chloride. Residues 377–386 (HFFPQYGIEA) are Periplasmic-facing. Residues 387–401 (GTFAIAGMGALFAAS) constitute an intramembrane region (helical). The segment at residues 402-404 (VRA) is an intramembrane region (note=Loop between two helices). Residues 405–416 (PLTGIVLVLEMT) constitute an intramembrane region (helical). Residues 417–421 (DNYQL) constitute an intramembrane region (note=Loop between two helices). The chain crosses the membrane as a helical span at residues 422–438 (ILPMIVTCLGATLIAQF). At 439–478 (MGGKPLYSAILARTLAKQEQARATVIAQEPAVENTPQTGR) the chain is on the cytoplasmic side. A chloride-binding site is contributed by Y445.

Belongs to the chloride channel (TC 2.A.49) family. ClcA subfamily. As to quaternary structure, homodimer.

Its subcellular location is the cell inner membrane. The catalysed reaction is 2 chloride(in) + H(+)(out) = 2 chloride(out) + H(+)(in). Functionally, proton-coupled chloride transporter. Functions as antiport system and exchanges two chloride ions for 1 proton. Probably acts as an electrical shunt for an outwardly-directed proton pump that is linked to amino acid decarboxylation, as part of the extreme acid resistance (XAR) response. This Yersinia pseudotuberculosis serotype IB (strain PB1/+) protein is H(+)/Cl(-) exchange transporter ClcA.